We begin with the raw amino-acid sequence, 347 residues long: uncharacterized protein (347 aa).

This is an uncharacterized protein from Invertebrate iridescent virus 3 (IIV-3).